Here is a 396-residue protein sequence, read N- to C-terminus: MSVFIYLVKGREKSLLRRHPWIFSKGIERVEGNPVDGDTVEIYANDGRWLARGAWSGSSQIRARVWTFDKEETVDLDFFLRRLKYAQESRDPLIKRQGLTGYRLCAAESDGLPGLTIDSYADFLVCQILSAGAEFQRELITQALRTLYPECSIYERSDVAVRKKEGLKERTGVIHGETPTEPVVIEENGVKILVDIRNGHKTGFYLDQRDNRQAVSKYTSAKRVLNCFSYTGGFGIYALKGGAKEVVNVDLSQTALDMARQNAELNGLDISNTQFIRHDVFKLLREYREKGEKFDVIVLDPPKFAESKAQLLGACRGYKDINMLAFQLLAPGGVLLTYSCSGLMEQSLFQKIVADAALDAGRDAQILELLSQASDHPIGTAYPEGFYLKGLVVRAR.

The 78-residue stretch at 2 to 79 (SVFIYLVKGR…KEETVDLDFF (78 aa)) folds into the PUA domain.

It belongs to the methyltransferase superfamily. RlmI family.

The protein resides in the cytoplasm. It catalyses the reaction cytidine(1962) in 23S rRNA + S-adenosyl-L-methionine = 5-methylcytidine(1962) in 23S rRNA + S-adenosyl-L-homocysteine + H(+). In terms of biological role, specifically methylates the cytosine at position 1962 (m5C1962) of 23S rRNA. The protein is Ribosomal RNA large subunit methyltransferase I of Aeromonas salmonicida (strain A449).